A 413-amino-acid polypeptide reads, in one-letter code: Calsequestrin-2 (413 aa).

Residues methionine 1–alanine 19 form the signal peptide. At tyrosine 282 the chain carries Phosphotyrosine. Residue asparagine 335 is glycosylated (N-linked (GlcNAc...) asparagine). The interval valine 365–glutamate 413 is disordered. The span at glutamate 373 to glutamate 413 shows a compositional bias: acidic residues. 2 positions are modified to phosphoserine: serine 398 and serine 405.

The protein belongs to the calsequestrin family. In terms of assembly, monomer, homodimer and homooligomer. Mostly monomeric in the absence of calcium. Forms higher oligomers in a calcium-dependent manner. Dimers associate to form tetramers, that then form linear homomer chains. Interacts with ASPH and TRDN. In terms of processing, phosphorylation in the C-terminus, probably by CK2, moderately increases calcium buffering capacity. N-glycosylated. As to expression, detected in stomach and vas deferens (at protein level).

Its subcellular location is the sarcoplasmic reticulum lumen. Its function is as follows. Calsequestrin is a high-capacity, moderate affinity, calcium-binding protein and thus acts as an internal calcium store in muscle. Calcium ions are bound by clusters of acidic residues at the protein surface, especially at the interface between subunits. Can bind around 60 Ca(2+) ions. Regulates the release of lumenal Ca(2+) via the calcium release channel RYR2; this plays an important role in triggering muscle contraction. Plays a role in excitation-contraction coupling in the heart and in regulating the rate of heart beats. The chain is Calsequestrin-2 (Casq2) from Rattus norvegicus (Rat).